Here is a 152-residue protein sequence, read N- to C-terminus: Calmodulin (152 aa).

N-acetylalanine is present on Ala2. EF-hand domains are found at residues 10-45 (EQIAEFKEAFSLFDKDGDGSITTKELGTVMRSLGQN), 46-81 (PTEAELQDMINEVDADGNGNIDFPEFLTMMARKMQD), 83-118 (DTEEEIREAFKVFDKDGNGYISAAELRHVMTSLGEK), and 119-152 (LTNEEVDEMIREADLDGDGQVNYDEFVKMMIVRN). Asp23, Asp25, Asp27, Ser29, Glu34, Asp59, Asp61, Asn63, Asn65, Glu70, Asp96, Asp98, Asn100, Tyr102, Glu107, Asp132, Asp134, Asp136, Gln138, and Glu143 together coordinate Ca(2+).

The protein belongs to the calmodulin family. In terms of assembly, interacts with cmbB, numA/nucleomorphin, pgkA/phosphoglycerate kinase, and thyB/thymidine kinase in the presence of Ca(2+). Interacts with dwwA in the absence of Ca(2+). Post-translationally, the N-terminus is blocked. Trimethylation of Lys-118 observed in other calmodulins is absent here.

The protein resides in the contractile vacuole. Its function is as follows. Calmodulin mediates the control of a large number of enzymes, ion channels and other proteins by Ca(2+). Among the enzymes to be stimulated by the calmodulin-Ca(2+) complex are a number of protein kinases and phosphatases. The protein is Calmodulin (calA) of Dictyostelium discoideum (Social amoeba).